The primary structure comprises 452 residues: MLEAECDEVELTSRDVGDYLMFKTRITDNFTGDLTLNINTSNLIKFKTCSFFICYGDDKDRYELGWTSTSTSRSIFQHYKDGKYIRDFRIQDPFPILSGSTFPVVISKIIANRVAFRMSRRLNNVIVDKLKNNIIEFLFVVYLDVDTGKIKPNTILKNLDLSSLFIVFSNNGNNKINLPYEIELQTKDRGIVYTKMGNPISYNLFNKFEDLLDIETKGVDKPEDKPKPVFDDKGKQPTDTVPPVDNGKPDISKPGEKQGDIDIASKFNNIVMAKLKAQSSSDPLTKKQCDQLMLSLIKWFEKFGITKDNARLLIFQFGISFSTSKENLNNITNNIVVENDKGGFVKILKIDYLNKLYGSIPESHTHNLERVLLRHYAQEILILLRSKVLEWPRKLARNKGIFEQYAYMACDFFDTAELELTEAETTALTTVKSWTMNHYKKKRQIVNSSQLE.

Basic and acidic residues-rich tracts occupy residues 219 to 236 (VDKP…KGKQ) and 247 to 258 (GKPDISKPGEKQ). The segment at 219 to 258 (VDKPEDKPKPVFDDKGKQPTDTVPPVDNGKPDISKPGEKQ) is disordered.

The protein belongs to the closteroviridae minor capsid protein family.

The protein localises to the virion. In terms of biological role, minor capsid protein that encapsidates the 5'-terminal portion of the viral genome. This Lettuce infectious yellows virus (isolate United States/92) (LIYV) protein is Minor capsid protein.